The chain runs to 101 residues: NAD(P)H-quinone oxidoreductase subunit 4L, chloroplastic (101 aa).

3 helical membrane-spanning segments follow: residues 2–22 (MFEH…YGLI), 32–52 (MCLE…SDLF), and 61–81 (IFSI…LAIV).

This sequence belongs to the complex I subunit 4L family. In terms of assembly, NDH is composed of at least 16 different subunits, 5 of which are encoded in the nucleus.

It localises to the plastid. It is found in the chloroplast thylakoid membrane. The catalysed reaction is a plastoquinone + NADH + (n+1) H(+)(in) = a plastoquinol + NAD(+) + n H(+)(out). The enzyme catalyses a plastoquinone + NADPH + (n+1) H(+)(in) = a plastoquinol + NADP(+) + n H(+)(out). Functionally, NDH shuttles electrons from NAD(P)H:plastoquinone, via FMN and iron-sulfur (Fe-S) centers, to quinones in the photosynthetic chain and possibly in a chloroplast respiratory chain. The immediate electron acceptor for the enzyme in this species is believed to be plastoquinone. Couples the redox reaction to proton translocation, and thus conserves the redox energy in a proton gradient. The polypeptide is NAD(P)H-quinone oxidoreductase subunit 4L, chloroplastic (Lemna minor (Common duckweed)).